The primary structure comprises 125 residues: uncharacterized protein (125 aa).

To transposase of insertion sequence IS6501.

This is an uncharacterized protein from Sinorhizobium fredii (strain NBRC 101917 / NGR234).